A 45-amino-acid chain; its full sequence is Large ribosomal subunit protein bL34 (45 aa).

This sequence belongs to the bacterial ribosomal protein bL34 family.

This is Large ribosomal subunit protein bL34 from Kocuria rhizophila (strain ATCC 9341 / DSM 348 / NBRC 103217 / DC2201).